The chain runs to 318 residues: L-carnitine dehydrogenase (318 aa).

14 to 19 contacts NAD(+); it reads GAGVIG.

It belongs to the 3-hydroxyacyl-CoA dehydrogenase family. L-carnitine dehydrogenase subfamily. As to quaternary structure, homodimer.

Its subcellular location is the cytoplasm. It carries out the reaction carnitine + NAD(+) = 3-dehydrocarnitine + NADH + H(+). Its pathway is amine and polyamine metabolism; carnitine metabolism. Catalyzes the NAD(+)-dependent oxidation of L-carnitine to 3-dehydrocarnitine. This chain is L-carnitine dehydrogenase, found in Streptomyces coelicolor (strain ATCC BAA-471 / A3(2) / M145).